Reading from the N-terminus, the 496-residue chain is Glycine receptor subunit beta (496 aa).

Positions 1–22 (MKFSLAISFFILMSLLFEDACA) are cleaved as a signal peptide. The Extracellular portion of the chain corresponds to 23-268 (KEKSSKKGKG…IFTLRRQVGF (246 aa)). Positions 32 to 53 (GKKKQYLCPSQQSPEDLARVPP) are disordered. A glycan (N-linked (GlcNAc...) asparagine) is linked at Asn54. Glycine contacts are provided by Arg108 and Ser174. The cysteines at positions 183 and 197 are disulfide-linked. Residue Asn242 is glycosylated (N-linked (GlcNAc...) asparagine). A disulfide bond links Cys243 and Cys255. Thr250 serves as a coordination point for glycine. The helical transmembrane segment at 269 to 289 (YMMGVYAPTLLIVVLSWLSFW) threads the bilayer. The Cytoplasmic segment spans residues 290-294 (INPDA). A helical transmembrane segment spans residues 295-315 (SAARVPLGIFSVLSLASECTT). The Extracellular segment spans residues 316–327 (LAAELPKVSYVK). A helical membrane pass occupies residues 328–349 (ALDVWLIACLLFGFASLVEYAV). Residues 350-471 (VQVMLNNPKR…KPVIPTAAKR (122 aa)) lie on the Cytoplasmic side of the membrane. At Thr391 the chain carries Phosphothreonine. The helical transmembrane segment at 472–495 (IDLYARALFPFCFLFFNVIYWSIY) threads the bilayer. A topological domain (extracellular) is located at residue Leu496.

This sequence belongs to the ligand-gated ion channel (TC 1.A.9) family. Glycine receptor (TC 1.A.9.3) subfamily. GLRB sub-subfamily. Forms heteropentamers with glycin receptor alpha subunits. Heteropentamers with GLRA1 can be composed of two GLRA1 and three GLRB subunits, or three GLRA1 and two GLRB subunits, or four GLRA1 subunits and one GLRB subunit. Forms heteropentamers with GLRA2. Functional GLRB-GLRA2 heteropentamers contain four GLRA2 subunits and one GLRB subunit, although alternative subunit composition cannot be excluded. Forms a heteropentamer with GLRA3. Interacts with GPHN. In terms of tissue distribution, detected in spinal cord, brain and brain stem, especially in the periolivary region, spinal nuclei, trigeminal nucleus, medulla oblongata, pons and midbrain. Detected in the inner plexiform layer of the retina (at protein level). High levels of expression in cortex, hippocampus, thalamus and cerebellum. Detected in spinal cord.

It localises to the postsynaptic cell membrane. It is found in the synapse. Its subcellular location is the cell projection. The protein resides in the dendrite. The protein localises to the cell membrane. It localises to the cytoplasm. The enzyme catalyses chloride(in) = chloride(out). Its activity is regulated as follows. Channel opening is triggered by extracellular glycine. Heteropentameric channels composed of GLRB and GLRA1 are activated by lower glycine levels than homopentameric GLRA1. Subunit of heteromeric glycine-gated chloride channels. Plays an important role in the down-regulation of neuronal excitability. Contributes to the generation of inhibitory postsynaptic currents. The polypeptide is Glycine receptor subunit beta (Glrb) (Mus musculus (Mouse)).